The chain runs to 721 residues: MSDFTKQTITEVISKEERPIPAAILAKKVLEKIPTLNKTDVYKLIDLLIQENTIKKLENNRLVIGYLDYEFDHEIKQGIITINSKGDGFIKEDNTEIEYYVNKKYLNGALKKDSVKFVKLKKEPKNNLQDAAVIEIVGHAKDHYVGQFITLPNGGYYIFVDDPLFYLNINLKDTTGLVNGHKILFKIISQTTKDAIAELVHIIGHKNDVGSDVLSIVYDNGIDPTFDPQVVDLASKLEFYVDEHQNKIRRSIIDREIISIDPVGSKDIDDAVYVKKLNDQRYFLGISIADVSFYVQPNTILDADAFKRGTSTYLVDRVIPMLPHNISNNICSLNEGEFRMCITCDMVIDKDGKICWKDVYPAIMKNYRQMSYDEVNDFYEGKSRFESATLTMKEMLLEAKELHHILRNKKIKDGYVDFDIKEPKIILDETGVPIDIKIYERKTAQMMVEDFMIAANEAVTMFAEEHMDKTLKEFNLEMPFIYRVHDKPSIINLQKFEIEAKKLSFNISHDFENIQPNTISNWLKMNDNHVNLPLISKLLLRSMAKASYEIINTGHFGLASDNYTHFTSPIRRYPDLIVHRLLWMFIFDSQSYTDKQRVELVNKLKLITEESNKNEIIAVKTERDVNAAKFAEYMNLHIGKEFIGVVTTVSSFGVFVELENTIEGLIRIKNLKDDFYDFIPENMTLVGQKRKKIITVGNKVRVRVIEANKLTRKIDFELVAQ.

The RNB domain maps to Arg-249–Phe-587. The S1 motif domain occupies Gly-639 to Val-719.

Belongs to the RNR ribonuclease family. RNase R subfamily.

The protein localises to the cytoplasm. The catalysed reaction is Exonucleolytic cleavage in the 3'- to 5'-direction to yield nucleoside 5'-phosphates.. 3'-5' exoribonuclease that releases 5'-nucleoside monophosphates and is involved in maturation of structured RNAs. The sequence is that of Ribonuclease R from Ureaplasma parvum serovar 3 (strain ATCC 700970).